Reading from the N-terminus, the 388-residue chain is MTSVSLGMPAAPPPVLAPRRKTRQIKVGSVGVGSDSPISVQSMTTTPTTDINATLQQIAELTASGCDIVRVACPSADDAEALPIIARKSQIPVIADIHFQPKYVFAAIEAGCAAVRVNPGNIRKFDDQVKEIAAAARDHGTSIRIGVNAGSLEPGIMKKYGKATPEALVESAVWEASLFEEHGFHDFKISVKHNDPVIMVAAYEMLAEKGDWPLHLGVTEAGPAFQGTIKSATAFGALLSRGIGDTIRVSLSAPPVEEIKVGNQILQSLNLRPRKLEIVSCPSCGRAQVDVYTLAEQVTAGLEGMEIPLRVAVMGCVVNGPGEAREADLGVASGNGKGQIFVKGEVIKTVPESEIVETLIEEAMRIAEEMGEADGEDAVKGSPVVSVS.

The [4Fe-4S] cluster site is built by C281, C284, C316, and E323.

The protein belongs to the IspG family. [4Fe-4S] cluster is required as a cofactor.

It carries out the reaction (2E)-4-hydroxy-3-methylbut-2-enyl diphosphate + oxidized [flavodoxin] + H2O + 2 H(+) = 2-C-methyl-D-erythritol 2,4-cyclic diphosphate + reduced [flavodoxin]. Its pathway is isoprenoid biosynthesis; isopentenyl diphosphate biosynthesis via DXP pathway; isopentenyl diphosphate from 1-deoxy-D-xylulose 5-phosphate: step 5/6. Converts 2C-methyl-D-erythritol 2,4-cyclodiphosphate (ME-2,4cPP) into 1-hydroxy-2-methyl-2-(E)-butenyl 4-diphosphate. The polypeptide is 4-hydroxy-3-methylbut-2-en-1-yl diphosphate synthase (flavodoxin) (Paenarthrobacter aurescens (strain TC1)).